The sequence spans 354 residues: Dihydroorotate dehydrogenase (quinone) (354 aa).

FMN-binding positions include 67–71 (AGFDK) and threonine 91. Position 71 (lysine 71) interacts with substrate. Residue 116-120 (NRMGF) coordinates substrate. Residues asparagine 144 and asparagine 177 each contribute to the FMN site. Residue asparagine 177 coordinates substrate. Serine 180 (nucleophile) is an active-site residue. Asparagine 182 serves as a coordination point for substrate. Residues lysine 213 and threonine 241 each contribute to the FMN site. Residue 242 to 243 (NT) coordinates substrate. FMN contacts are provided by residues glycine 265, glycine 294, and 315–316 (YT).

This sequence belongs to the dihydroorotate dehydrogenase family. Type 2 subfamily. As to quaternary structure, monomer. The cofactor is FMN.

It localises to the cell membrane. It catalyses the reaction (S)-dihydroorotate + a quinone = orotate + a quinol. It participates in pyrimidine metabolism; UMP biosynthesis via de novo pathway; orotate from (S)-dihydroorotate (quinone route): step 1/1. In terms of biological role, catalyzes the conversion of dihydroorotate to orotate with quinone as electron acceptor. This chain is Dihydroorotate dehydrogenase (quinone), found in Mycolicibacterium smegmatis (strain ATCC 700084 / mc(2)155) (Mycobacterium smegmatis).